Here is a 133-residue protein sequence, read N- to C-terminus: Secretin (133 aa).

Residues 1–22 (MEPPLPTPMLLLLLLLLSSSAA) form the signal peptide. Residues 23–30 (LPAPPRTP) constitute a propeptide that is removed on maturation. Residue Val58 is modified to Valine amide. A Phosphoserine modification is found at Ser62. The propeptide occupies 62–133 (SEQDTENIPE…EWTETTRPPR (72 aa)).

This sequence belongs to the glucagon family. As to expression, highly expressed in the intestine. Also expressed in the hippocampus, cerebellum and the brain stem in adult mouse brain. In the hippocampus, expressed in the dentate gyrus, the hilus and the molecular layer.

Its subcellular location is the secreted. Its function is as follows. Hormone involved in different processes, such as regulation of the pH of the duodenal content, food intake and water homeostasis. Exerts its biological effects by binding to secretin receptor (SCTR), a G-protein coupled receptor expressed in the basolateral domain of several cells. Acts as a key gastrointestinal hormone by regulating the pH of the duodenal content. Secreted by S cells of the duodenum in the crypts of Lieberkuehn and regulates the pH of the duodenum by (1) inhibiting the secretion of gastric acid from the parietal cells of the stomach and (2) stimulating the production of bicarbonate (NaHCO(3)) from the ductal cells of the pancreas. Production of bicarbonate is essential to neutralize the pH and ensure no damage is done to the small intestine by the gastric acid. In addition to regulating the pH of the duodenal content, plays a central role in diet induced thermogenesis: acts as a non-sympathetic brown fat (BAT) activator mediating prandial thermogenesis, which consequentially induces satiation. Mechanistically, secretin released by the gut after a meal binds to secretin receptor (SCTR) in brown adipocytes, activating brown fat thermogenesis by stimulating lipolysis, which is sensed in the brain and promotes satiation. Also able to stimulate lipolysis in white adipocytes. Also plays an important role in cellular osmoregulation: released into the systemic circulation in response to hyperosmolality and acts at different levels in the hypothalamus, pituitary and kidney to regulate water homeostasis. Also plays a role in the central nervous system, possibly by acting as a neuropeptide hormone: required for hippocampal synaptic function and neural progenitor cells maintenance. In Mus musculus (Mouse), this protein is Secretin.